A 299-amino-acid polypeptide reads, in one-letter code: NmrA-like family domain-containing protein 1 (299 aa).

NADP(+)-binding positions include 11–16 (GGTGAQ), 37–41 (RNPRK), 58–59 (DQ), Q62, 79–81 (TNY), K92, K133, and 155–158 (YFEN). The interval 153–189 (PCYFENLLSHFLPQKAPDGKSYLLSLPTGDVPMDGMS) is interaction with ASS1.

Belongs to the NmrA-type oxidoreductase family. In terms of assembly, homodimer. Interacts with ASS1. Interaction is enhanced by low NADPH/NADP(+) ratios, which results in inhibition of ASS1 activity.

Its subcellular location is the cytoplasm. It localises to the perinuclear region. It is found in the nucleus. Its function is as follows. Redox sensor protein. Undergoes restructuring and subcellular redistribution in response to changes in intracellular NADPH/NADP(+) levels. At low NADPH concentrations the protein is found mainly as a monomer, and binds argininosuccinate synthase (ASS1), the enzyme involved in nitric oxide synthesis. Association with ASS1 impairs its activity and reduces the production of nitric oxide, which subsecuently prevents apoptosis. Under normal NADPH concentrations, the protein is found as a dimer and hides the binding site for ASS1. The homodimer binds one molecule of NADPH. Has higher affinity for NADPH than for NADP(+). Binding to NADPH is necessary to form a stable dimer. The protein is NmrA-like family domain-containing protein 1 (NMRAL1) of Homo sapiens (Human).